We begin with the raw amino-acid sequence, 299 residues long: DNA-binding transcriptional activator HetR (299 aa).

Ser-152 is an active-site residue.

The protein belongs to the peptidase S48 family. As to quaternary structure, homodimer; disulfide-linked.

In terms of biological role, controls heterocyst differentiation. Dimerization is required for DNA-binding. Has both a protease and a DNA-binding activity. Increased expression leads to more heterocysts than usual. The protein is DNA-binding transcriptional activator HetR of Nostoc punctiforme (strain ATCC 29133 / PCC 73102).